A 167-amino-acid polypeptide reads, in one-letter code: Lipoprotein signal peptidase (167 aa).

The next 4 helical transmembrane spans lie at Thr8 to Leu28, Trp46 to Phe66, Lys70 to Ile90, and Ile101 to Gly121. Active-site residues include Asp125 and Asp143. The helical transmembrane segment at Phe139–Phe159 threads the bilayer.

The protein belongs to the peptidase A8 family.

It localises to the cell inner membrane. The enzyme catalyses Release of signal peptides from bacterial membrane prolipoproteins. Hydrolyzes -Xaa-Yaa-Zaa-|-(S,diacylglyceryl)Cys-, in which Xaa is hydrophobic (preferably Leu), and Yaa (Ala or Ser) and Zaa (Gly or Ala) have small, neutral side chains.. It functions in the pathway protein modification; lipoprotein biosynthesis (signal peptide cleavage). Its function is as follows. This protein specifically catalyzes the removal of signal peptides from prolipoproteins. The sequence is that of Lipoprotein signal peptidase from Chlamydia muridarum (strain MoPn / Nigg).